The chain runs to 482 residues: Cobyrinate a,c-diamide synthase (482 aa).

The 194-residue stretch at 248–441 (RLAIAQDQAF…LHLHWGSQIS (194 aa)) folds into the GATase cobBQ-type domain. The active-site Nucleophile is Cys-331.

It belongs to the CobB/CbiA family. Mg(2+) is required as a cofactor.

The catalysed reaction is cob(II)yrinate + 2 L-glutamine + 2 ATP + 2 H2O = cob(II)yrinate a,c diamide + 2 L-glutamate + 2 ADP + 2 phosphate + 2 H(+). It participates in cofactor biosynthesis; adenosylcobalamin biosynthesis; cob(II)yrinate a,c-diamide from sirohydrochlorin (anaerobic route): step 10/10. Catalyzes the ATP-dependent amidation of the two carboxylate groups at positions a and c of cobyrinate, using either L-glutamine or ammonia as the nitrogen source. In Synechocystis sp. (strain ATCC 27184 / PCC 6803 / Kazusa), this protein is Cobyrinate a,c-diamide synthase.